We begin with the raw amino-acid sequence, 400 residues long: Phosphoglycerate kinase (400 aa).

Substrate contacts are provided by residues 21 to 23 (DFN), Arg-37, 60 to 63 (HLGR), Arg-121, and Arg-154. Residues Lys-204, Glu-326, and 355–358 (GGDS) each bind ATP.

The protein belongs to the phosphoglycerate kinase family. Monomer.

It localises to the cytoplasm. It catalyses the reaction (2R)-3-phosphoglycerate + ATP = (2R)-3-phospho-glyceroyl phosphate + ADP. It functions in the pathway carbohydrate degradation; glycolysis; pyruvate from D-glyceraldehyde 3-phosphate: step 2/5. In Chloroflexus aurantiacus (strain ATCC 29366 / DSM 635 / J-10-fl), this protein is Phosphoglycerate kinase.